Here is a 660-residue protein sequence, read N- to C-terminus: Crossover junction endonuclease MUS81 (660 aa).

The Helix-hairpin-helix motif 1 signature appears at Lys-62–Ser-81. The span at Phe-82 to Gly-98 shows a compositional bias: low complexity. Residues Phe-82 to Arg-109 form a disordered region. Positions Leu-411 to Asp-506 constitute an ERCC4 domain. The Helix-hairpin-helix motif 2 motif lies at Thr-586–Tyr-623.

The protein belongs to the XPF family. As to quaternary structure, forms a heterodimer with EME1. Interacts with RAD54. Mg(2+) serves as cofactor. Ca(2+) is required as a cofactor. As to expression, low expression in shoots and roots from etiolated seedlings, and panicles after meiosis; moderate expression in young panicles under differentiation of floral organs before and during meiosis; and high expression in mature leaves.

It localises to the nucleus. Functionally, interacts with EME1 to form a DNA structure-specific endonuclease with substrate preference for branched DNA structures with a 5'-end at the branch nick. Typical substrates include 3'-flap structures, D-loops, replication forks, nicked Holliday junctions and also intact Holliday junctions with a reduced efficiency. May be required in mitosis for the processing of stalled or collapsed replication fork intermediates. Plays a role in DNA repair and in genotoxic stress-induced homologous recombination (HR) in somatic cells. Mediates a subset of meiotic recombination events that are insensitive to crossover interference. In Oryza sativa subsp. japonica (Rice), this protein is Crossover junction endonuclease MUS81 (MUS81).